The following is a 138-amino-acid chain: Phosphoribosyl-AMP cyclohydrolase (138 aa).

Aspartate 84 lines the Mg(2+) pocket. Cysteine 85 is a Zn(2+) binding site. Aspartate 86 and aspartate 88 together coordinate Mg(2+). Cysteine 102 and cysteine 109 together coordinate Zn(2+).

The protein belongs to the PRA-CH family. Homodimer. Mg(2+) serves as cofactor. Zn(2+) is required as a cofactor.

Its subcellular location is the cytoplasm. The enzyme catalyses 1-(5-phospho-beta-D-ribosyl)-5'-AMP + H2O = 1-(5-phospho-beta-D-ribosyl)-5-[(5-phospho-beta-D-ribosylamino)methylideneamino]imidazole-4-carboxamide. Its pathway is amino-acid biosynthesis; L-histidine biosynthesis; L-histidine from 5-phospho-alpha-D-ribose 1-diphosphate: step 3/9. Functionally, catalyzes the hydrolysis of the adenine ring of phosphoribosyl-AMP. The polypeptide is Phosphoribosyl-AMP cyclohydrolase (Burkholderia pseudomallei (strain K96243)).